Consider the following 456-residue polypeptide: Protein FAM124B (456 aa).

Residues 262 to 313 are disordered; it reads NGCLRGDTHPQDSSLNSVSTQRTLEPRSRRRSRSRRFKVHSLELPQPSGSWE. Residues 272-284 are compositionally biased toward polar residues; it reads QDSSLNSVSTQRT. The span at 289–300 shows a compositional bias: basic residues; it reads SRRRSRSRRFKV.

The protein belongs to the FAM124 family. Interacts with CHD7 and CHD8. Expressed strongly in lung, at slightly lower levels in heart, kidney, brain and testis, and weakly in liver (at protein level). In brain, highly expressed in cortex, hippocampus, dentate gyrus, caudate putamen and cerebellum (at protein level).

It localises to the nucleus. The sequence is that of Protein FAM124B (Fam124b) from Mus musculus (Mouse).